Here is a 235-residue protein sequence, read N- to C-terminus: Regulator of G-protein signaling 18 (235 aa).

Ser49 is subject to Phosphoserine. One can recognise an RGS domain in the interval 86–202 (SFDKLLSHRD…LKSETYLHLI (117 aa)). Phosphoserine is present on residues Ser216 and Ser218.

In terms of tissue distribution, expressed in bone marrow, spleen, fetal liver and lung. At very low levels expressed in heart.

It localises to the cytoplasm. In terms of biological role, inhibits signal transduction by increasing the GTPase activity of G protein alpha subunits thereby driving them into their inactive GDP-bound form. Binds to G(i) alpha-1, G(i) alpha-2, G(i) alpha-3 and G(q) alpha. This is Regulator of G-protein signaling 18 (Rgs18) from Mus musculus (Mouse).